The sequence spans 554 residues: Heterochromatin protein 1-binding protein 3 (554 aa).

An N-acetylalanine modification is found at alanine 2. Serine 6 carries the phosphoserine modification. Disordered stretches follow at residues 30 to 136 (LGEK…KTIP) and 142 to 161 (SASQ…SPRP). Phosphothreonine is present on threonine 51. Residues 60-71 (GEEEKPEPDGSS) are compositionally biased toward acidic residues. Lysine 64 participates in a covalent cross-link: Glycyl lysine isopeptide (Lys-Gly) (interchain with G-Cter in SUMO2). 2 positions are modified to phosphothreonine: glutamate 72 and threonine 85. Over residues 72–93 (EESISTVEEQENETPPATSSEA) the composition is skewed to polar residues. The span at 94 to 129 (EQPKGEPESGEKEENNNKSAEEPKKDEKDQSKEKEK) shows a compositional bias: basic and acidic residues. Lysine 97 is covalently cross-linked (Glycyl lysine isopeptide (Lys-Gly) (interchain with G-Cter in SUMO2)). Over residues 142–156 (SASQLARAQRQTPMA) the composition is skewed to polar residues. Phosphoserine is present on residues serine 144, serine 157, and serine 158. Residues 159-234 (PRPKMDAILT…GASGSFVVVQ (76 aa)) enclose the H15 1 domain. Position 192 is an N6-acetyllysine (lysine 192). The interval 229-254 (SFVVVQKSKPPQKSKNRKKGSALDPE) is disordered. A compositionally biased stretch (basic residues) spans 238–248 (PPQKSKNRKKG). Serine 249 bears the Phosphoserine mark. Positions 255 to 259 (PQVKL) match the PxVxL motif motif. 2 H15 domains span residues 255–330 (PQVK…QLKK) and 337–413 (LGGS…QLSF). A Glycyl lysine isopeptide (Lys-Gly) (interchain with G-Cter in SUMO2) cross-link involves residue lysine 258. Positions 420–554 (GVLFPKKESG…AMKKSFKTKK (135 aa)) are disordered. The span at 430–451 (GSDDEDEDDDDDESSEDSEDEE) shows a compositional bias: acidic residues. Serine 443, serine 444, and serine 447 each carry phosphoserine. Residues 464-475 (AKSQGKTASMKQ) show a composition bias toward polar residues. Basic residues-rich tracts occupy residues 490 to 511 (GKVR…RKAR) and 544 to 554 (SAMKKSFKTKK).

As to quaternary structure, interacts (via PxVxL motif) with CBX5 (via Trp-174).

The protein localises to the nucleus. It localises to the chromosome. Functionally, component of heterochromatin that maintains heterochromatin integrity during G1/S progression and regulates the duration of G1 phase to critically influence cell proliferative capacity. May play a role in hypoxia-induced oncogenesis. This chain is Heterochromatin protein 1-binding protein 3 (Hp1bp3), found in Mus musculus (Mouse).